A 514-amino-acid chain; its full sequence is Na(+)/H(+) antiporter NhaB (514 aa).

12 helical membrane passes run 23 to 43 (LALLVFLIVNPFIFLANPFIA), 63 to 83 (PLLPGGLLAIEAVIIGMTSAA), 97 to 117 (LLLMFMVAGIYFMKQLLLFIF), 120 to 140 (LLLSIRSKMVLSLAFCVAAAF), 144 to 164 (FLDALTVVAVVISVAVGFYGI), 202 to 222 (LMMHAGVGTALGGVMTMVGEP), 238 to 258 (FFLRMSPVTVPVLVCGLLTCM), 303 to 323 (AVIGVWLVTALALHLAEVGLI), 357 to 377 (LTVFFSIVAVIIDQHLFAPII), 391 to 411 (LFYLFNGLLSSISDNVFVGTI), 447 to 467 (ATPNGQAAFLFLLTSALAPLI), and 475 to 495 (VWMALPYTIVLTLIGLLCVEF).

This sequence belongs to the NhaB Na(+)/H(+) (TC 2.A.34) antiporter family.

It localises to the cell inner membrane. The catalysed reaction is 2 Na(+)(in) + 3 H(+)(out) = 2 Na(+)(out) + 3 H(+)(in). Functionally, na(+)/H(+) antiporter that extrudes sodium in exchange for external protons. This is Na(+)/H(+) antiporter NhaB from Salmonella gallinarum (strain 287/91 / NCTC 13346).